The following is a 180-amino-acid chain: Oligoribonuclease (180 aa).

Positions 7 to 170 constitute an Exonuclease domain; it reads LIWIDLEMTG…DDIRESLAEL (164 aa). Tyrosine 128 is an active-site residue.

This sequence belongs to the oligoribonuclease family.

It is found in the cytoplasm. 3'-to-5' exoribonuclease specific for small oligoribonucleotides. This chain is Oligoribonuclease, found in Pectobacterium atrosepticum (strain SCRI 1043 / ATCC BAA-672) (Erwinia carotovora subsp. atroseptica).